Reading from the N-terminus, the 213-residue chain is MTDRRGLLIILSSPSGAGKSTLARRLMSWDPGLKFSVSATTRAPRPGEEHGREYYFLSEDQFKGQVRRGEMLEHAHVFGNFYGSPAGPVRDTIEAGQDVLFDVDWQGEIQIRNSDLGKHALSIFILPPSIKELRRRLESRGQDSAEVISRRMLKSWDEISHWGYYDYVLINDDLDATEERLKTIVSAERMRRIQQPALQEHVRKLQSEFEDLS.

The region spanning 6-186 (GLLIILSSPS…TEERLKTIVS (181 aa)) is the Guanylate kinase-like domain. 13 to 20 (SPSGAGKS) serves as a coordination point for ATP.

The protein belongs to the guanylate kinase family.

The protein localises to the cytoplasm. The enzyme catalyses GMP + ATP = GDP + ADP. Its function is as follows. Essential for recycling GMP and indirectly, cGMP. This Ruegeria pomeroyi (strain ATCC 700808 / DSM 15171 / DSS-3) (Silicibacter pomeroyi) protein is Guanylate kinase.